Reading from the N-terminus, the 72-residue chain is Small ribosomal subunit protein eS17 (72 aa).

Belongs to the eukaryotic ribosomal protein eS17 family.

The chain is Small ribosomal subunit protein eS17 from Nanoarchaeum equitans (strain Kin4-M).